A 41-amino-acid polypeptide reads, in one-letter code: Large ribosomal subunit protein bL36 (41 aa).

Belongs to the bacterial ribosomal protein bL36 family.

The chain is Large ribosomal subunit protein bL36 from Caulobacter vibrioides (strain ATCC 19089 / CIP 103742 / CB 15) (Caulobacter crescentus).